A 576-amino-acid chain; its full sequence is Periodic tryptophan protein 1 (576 aa).

The segment at 41-134 (AKATLEEAEG…LPNQEDSQEE (94 aa)) is disordered. Acidic residues-rich tracts occupy residues 46 to 58 (EEAEGESGVEDDA) and 71 to 91 (DIDDDLKEYNLEEYDDEEIAD). At S52 the chain carries Phosphoserine. A compositionally biased stretch (basic and acidic residues) spans 108 to 120 (SDVKFHEGEKGED). The residue at position 131 (S131) is a Phosphoserine. WD repeat units follow at residues 207–252 (AFPL…KAFP), 284–324 (HHTD…AARS), 329–369 (HSNK…ESQM), 376–414 (MAGEEIETVTFASENIILCGTDSGNVYSFDIRNNENRKP), 420–461 (AHDA…ATNT), and 472–514 (FDVG…SVRK). The interval 530–576 (EAQKIGKSSRIARKYTSNDNPDTVITIDDQGEDEEEREGGDEHDDMA) is disordered. Residues 558–576 (DQGEDEEEREGGDEHDDMA) show a composition bias toward acidic residues.

The protein belongs to the WD repeat PWP1 family.

The polypeptide is Periodic tryptophan protein 1 (PWP1) (Saccharomyces cerevisiae (strain ATCC 204508 / S288c) (Baker's yeast)).